The following is a 311-amino-acid chain: Thioredoxin reductase (311 aa).

An FAD-binding site is contributed by 35–42; the sequence is ERGIPGGQ. A disulfide bond links Cys-134 and Cys-137. FAD is bound at residue 277-286; it reads DVRDKGLRQI.

The protein belongs to the class-II pyridine nucleotide-disulfide oxidoreductase family. In terms of assembly, homodimer. It depends on FAD as a cofactor.

Its subcellular location is the cytoplasm. The catalysed reaction is [thioredoxin]-dithiol + NADP(+) = [thioredoxin]-disulfide + NADPH + H(+). In Staphylococcus aureus (strain COL), this protein is Thioredoxin reductase (trxB).